The following is a 767-amino-acid chain: AMP deaminase 3 (767 aa).

A phosphoserine mark is found at serine 85 and serine 107. Disordered stretches follow at residues 89 to 111 (QMPP…PTTP) and 181 to 205 (LGHP…PLPQ). Zn(2+) is bound by residues histidine 317 and histidine 319. Substrate-binding positions include histidine 319 and 388-393 (KFNSKY). Histidine 586 serves as a coordination point for Zn(2+). Glutamate 589 is a binding site for substrate. The Proton acceptor role is filled by histidine 608. Aspartate 663 contacts Zn(2+). 664–667 (DPMQ) contributes to the substrate binding site.

This sequence belongs to the metallo-dependent hydrolases superfamily. Adenosine and AMP deaminases family. Homotetramer. Zn(2+) is required as a cofactor.

It catalyses the reaction AMP + H2O + H(+) = IMP + NH4(+). Its pathway is purine metabolism; IMP biosynthesis via salvage pathway; IMP from AMP: step 1/1. In terms of biological role, AMP deaminase plays a critical role in energy metabolism. The sequence is that of AMP deaminase 3 from Homo sapiens (Human).